A 146-amino-acid chain; its full sequence is Large ribosomal subunit protein bL21 (146 aa).

The segment at 96 to 146 is disordered; that stretch reads KKKTRRKMGHRQELTRVMVKSISITNSTPKTSSKTEVKKKSTSPKASNPEN.

This sequence belongs to the bacterial ribosomal protein bL21 family. Part of the 50S ribosomal subunit. Contacts protein L20.

This protein binds to 23S rRNA in the presence of protein L20. The polypeptide is Large ribosomal subunit protein bL21 (Prochlorococcus marinus subsp. pastoris (strain CCMP1986 / NIES-2087 / MED4)).